Here is a 379-residue protein sequence, read N- to C-terminus: Acyl-CoA dehydrogenase, short-chain specific (379 aa).

The protein belongs to the acyl-CoA dehydrogenase family. FAD serves as cofactor.

The enzyme catalyses butanoyl-CoA + oxidized [electron-transfer flavoprotein] + H(+) = (2E)-butenoyl-CoA + reduced [electron-transfer flavoprotein]. It catalyses the reaction a short-chain 2,3-saturated fatty acyl-CoA + oxidized [electron-transfer flavoprotein] + H(+) = a short-chain (2E)-enoyl-CoA + reduced [electron-transfer flavoprotein]. Its pathway is lipid metabolism; butanoate metabolism. The sequence is that of Acyl-CoA dehydrogenase, short-chain specific (bcd) from Clostridium acetobutylicum (strain ATCC 824 / DSM 792 / JCM 1419 / IAM 19013 / LMG 5710 / NBRC 13948 / NRRL B-527 / VKM B-1787 / 2291 / W).